The following is a 140-amino-acid chain: CDGSH iron-sulfur domain-containing protein 2 homolog (140 aa).

Topologically, residues Met1 to Asp35 are lumenal. Residues Ala36 to Gln59 traverse the membrane as a helical segment. The Cytoplasmic portion of the chain corresponds to Pro60–Asn140. Positions 104, 106, 115, and 119 each coordinate [2Fe-2S] cluster.

It belongs to the CISD protein family. CISD2 subfamily. Requires [2Fe-2S] cluster as cofactor.

It is found in the endoplasmic reticulum membrane. The sequence is that of CDGSH iron-sulfur domain-containing protein 2 homolog from Trichoplax adhaerens (Trichoplax reptans).